Consider the following 552-residue polypeptide: Membrane protein insertase YidC (552 aa).

5 consecutive transmembrane segments (helical) span residues 7–24 (VLWV…DNWQ), 364–384 (WGWA…PLSA), 434–454 (LPVV…LASV), 473–493 (PFFI…SLNP), and 508–528 (PIAF…YYVV).

The protein belongs to the OXA1/ALB3/YidC family. Type 1 subfamily. In terms of assembly, interacts with the Sec translocase complex via SecD. Specifically interacts with transmembrane segments of nascent integral membrane proteins during membrane integration.

It is found in the cell inner membrane. Functionally, required for the insertion and/or proper folding and/or complex formation of integral membrane proteins into the membrane. Involved in integration of membrane proteins that insert both dependently and independently of the Sec translocase complex, as well as at least some lipoproteins. Aids folding of multispanning membrane proteins. This is Membrane protein insertase YidC from Burkholderia cenocepacia (strain HI2424).